Here is a 1069-residue protein sequence, read N- to C-terminus: Kinesin-like protein vab-8 (1069 aa).

Residues 15–325 form the Kinesin motor domain; sequence PLRTIPKLRL…ACKIARTRVK (311 aa). Disordered regions lie at residues 328–374, 391–436, and 572–598; these read MGHG…LESG, SRTT…KSSP, and EQEE…RILS. Interaction with unc-51 regions lie at residues 331 to 517 and 517 to 719; these read GRKP…KSKY and YNLD…TVVD. Low complexity-rich tracts occupy residues 339–364 and 391–407; these read SSGT…GTPR and SRTT…TPTS. The interval 403–877 is interaction with unc-73; the sequence is STPTSIRPLH…SAERDRKTSK (475 aa). Residues 719–769 are a coiled coil; sequence DWSQIERKKEREKDAMEEEKRKEVLRERRAKLKITELEIKRERNMIDKELD. A disordered region spans residues 786 to 960; that stretch reads SLSPCRGGRT…RQSYSASSGY (175 aa). Positions 824-847 are enriched in low complexity; sequence GGSLAKLSASGASGSGPPSSPSLG. Over residues 883-897 the composition is skewed to basic and acidic residues; it reads SSKERRSSGSKEELQ. Residues 906–928 show a composition bias toward low complexity; sequence TSPKTYGGPGTSSSGRGSSAPGS. The span at 938 to 960 shows a compositional bias: polar residues; it reads TEKTANGTMPRSKRQSYSASSGY. The stretch at 990–1027 forms a coiled coil; it reads LVRQADEIRHRQWQLKKELEEAKRAIGQEEDAKMIANS.

This sequence belongs to the TRAFAC class myosin-kinesin ATPase superfamily. Kinesin family. KIF26 subfamily. As to quaternary structure, interacts with unc-51 and unc-73. Post-translationally, phosphorylated by unc-51.

The protein localises to the cytoplasm. The protein resides in the cytoskeleton. Its function is as follows. Required for posterior migration of cells and axon growth cones during nervous system assembly. In PLM neuron, regulates innexin unc-9 gap junction turnover by suppressing unc-9 transport out of the gap junctions. This is Kinesin-like protein vab-8 (vab-8) from Caenorhabditis briggsae.